A 121-amino-acid chain; its full sequence is MPTINQLVRKNRKQKKSQSKSPVLEKCPQKQGVCLQVRTMTPKKPNSALRKITRVRLSNGKEVTVYIPGEGHNLQEHSIVLVRGGRVRDLPGVRYQVVRGSRDALGVDGRKQSRSRYGAKK.

Residues 1–25 are disordered; it reads MPTINQLVRKNRKQKKSQSKSPVLE. Residues 9 to 18 show a composition bias toward basic residues; sequence RKNRKQKKSQ. Aspartate 89 carries the 3-methylthioaspartic acid modification.

This sequence belongs to the universal ribosomal protein uS12 family. As to quaternary structure, part of the 30S ribosomal subunit. Contacts proteins S8 and S17. May interact with IF1 in the 30S initiation complex.

Its function is as follows. With S4 and S5 plays an important role in translational accuracy. Interacts with and stabilizes bases of the 16S rRNA that are involved in tRNA selection in the A site and with the mRNA backbone. Located at the interface of the 30S and 50S subunits, it traverses the body of the 30S subunit contacting proteins on the other side and probably holding the rRNA structure together. The combined cluster of proteins S8, S12 and S17 appears to hold together the shoulder and platform of the 30S subunit. The sequence is that of Small ribosomal subunit protein uS12 from Rhodopirellula baltica (strain DSM 10527 / NCIMB 13988 / SH1).